Here is a 225-residue protein sequence, read N- to C-terminus: Pyridoxine/pyridoxamine 5'-phosphate oxidase (225 aa).

Substrate is bound by residues 21–24 (RKSY) and Lys79. FMN contacts are provided by residues 74 to 79 (RVVLIK), 89 to 90 (YT), Arg95, and Lys96. Residues Tyr136, Arg140, and Ser144 each coordinate substrate. FMN contacts are provided by residues 153–154 (QS) and Trp197. 203-205 (RLH) provides a ligand contact to substrate. Arg207 provides a ligand contact to FMN.

This sequence belongs to the pyridoxamine 5'-phosphate oxidase family. Homodimer. Requires FMN as cofactor.

The catalysed reaction is pyridoxamine 5'-phosphate + O2 + H2O = pyridoxal 5'-phosphate + H2O2 + NH4(+). The enzyme catalyses pyridoxine 5'-phosphate + O2 = pyridoxal 5'-phosphate + H2O2. It participates in cofactor metabolism; pyridoxal 5'-phosphate salvage; pyridoxal 5'-phosphate from pyridoxamine 5'-phosphate: step 1/1. The protein operates within cofactor metabolism; pyridoxal 5'-phosphate salvage; pyridoxal 5'-phosphate from pyridoxine 5'-phosphate: step 1/1. In terms of biological role, catalyzes the oxidation of either pyridoxine 5'-phosphate (PNP) or pyridoxamine 5'-phosphate (PMP) into pyridoxal 5'-phosphate (PLP). This chain is Pyridoxine/pyridoxamine 5'-phosphate oxidase, found in Paracidovorax citrulli (strain AAC00-1) (Acidovorax citrulli).